The chain runs to 214 residues: Adenylate kinase (214 aa).

10–15 lines the ATP pocket; that stretch reads GAGKGT. The NMP stretch occupies residues 30-59; that stretch reads STGDMFRAALKNQTPLGLKAKEYMDKGELV. AMP-binding positions include T31, R36, 57–59, 85–88, and Q92; these read ELV and GFPR. Residues 126 to 163 form an LID region; that stretch reads GRRVCRQCGATYHVKFNPPKVEGVCDACGGELYQRSDD. R127 lines the ATP pocket. The Zn(2+) site is built by C130 and C133. ATP is bound at residue 136–137; the sequence is TY. Residues C150 and C153 each contribute to the Zn(2+) site. Residues R160 and R171 each contribute to the AMP site. K199 lines the ATP pocket.

It belongs to the adenylate kinase family. As to quaternary structure, monomer.

It is found in the cytoplasm. It carries out the reaction AMP + ATP = 2 ADP. It participates in purine metabolism; AMP biosynthesis via salvage pathway; AMP from ADP: step 1/1. Catalyzes the reversible transfer of the terminal phosphate group between ATP and AMP. Plays an important role in cellular energy homeostasis and in adenine nucleotide metabolism. The sequence is that of Adenylate kinase from Carboxydothermus hydrogenoformans (strain ATCC BAA-161 / DSM 6008 / Z-2901).